Here is a 265-residue protein sequence, read N- to C-terminus: Putative carbamate hydrolase RutD (265 aa).

Residues 21–123 form the AB hydrolase-1 domain; sequence PILLSAGMGG…TIVNGWARAD (103 aa).

Belongs to the AB hydrolase superfamily. Hydrolase RutD family.

The catalysed reaction is carbamate + 2 H(+) = NH4(+) + CO2. Functionally, involved in pyrimidine catabolism. May facilitate the hydrolysis of carbamate, a reaction that can also occur spontaneously. The polypeptide is Putative carbamate hydrolase RutD (Azorhizobium caulinodans (strain ATCC 43989 / DSM 5975 / JCM 20966 / LMG 6465 / NBRC 14845 / NCIMB 13405 / ORS 571)).